Reading from the N-terminus, the 493-residue chain is Tripartite motif-containing protein 5 (493 aa).

A2 carries the N-acetylalanine modification. The RING-type zinc finger occupies 15 to 59; the sequence is CPICLELLTQPLSLDCGHSFCQACLTANHKKSMLDKGESSCPVCR. The residue at position 86 (S86) is a Phosphoserine. The segment at 90–132 adopts a B box-type zinc-finger fold; that stretch reads QKVDHCARHGEKLLLFCQEDGKVICWLCERSQEHRGHHTFLTE. Positions 95, 98, 117, and 123 each coordinate Zn(2+). A coiled-coil region spans residues 131-240; it reads TEEVAREYQV…LISDLERRLQ (110 aa). The tract at residues 185–198 is required for interaction with GABARAP and for autophagy; that stretch reads FEQLRDILDWEESN. The B30.2/SPRY domain maps to 281 to 493; that stretch reads LKGMLEVFRE…VPMTLCSPSS (213 aa).

This sequence belongs to the TRIM/RBCC family. Can form homodimers and homotrimers. In addition to lower-order dimerization, also exhibits a higher-order multimerization and both low- and high-order multimerizations are essential for its restriction activity. Interacts with BTBD1 and BTBD2. Interacts with PSMC4, PSMC5, PSMD7 and HSPA8/HSC70. Interacts (via B30.2/SPRY domain) with HSPA1A/B. Interacts with PSMC2, MAP3K7/TAK1, TAB2 and TAB3. Interacts with SQSTM1. Interacts with TRIM6 and TRIM34. Interacts with ULK1 (phosphorylated form), GABARAP, GABARAPL1, GABARAPL2, MAP1LC3A, MAP1LC3C and BECN1. Post-translationally, degraded in a proteasome-independent fashion in the absence of viral infection but in a proteasome-dependent fashion following exposure to restriction sensitive virus. Autoubiquitinated in a RING finger- and UBE2D2-dependent manner. Monoubiquitinated by TRIM21. Deubiquitinated by Yersinia YopJ. Ubiquitination may not lead to proteasomal degradation.

The protein localises to the cytoplasm. Its subcellular location is the nucleus. It catalyses the reaction S-ubiquitinyl-[E2 ubiquitin-conjugating enzyme]-L-cysteine + [acceptor protein]-L-lysine = [E2 ubiquitin-conjugating enzyme]-L-cysteine + N(6)-ubiquitinyl-[acceptor protein]-L-lysine.. It functions in the pathway protein modification; protein ubiquitination. In terms of biological role, capsid-specific restriction factor that prevents infection from non-host-adapted retroviruses. Blocks viral replication early in the life cycle, after viral entry but before reverse transcription. In addition to acting as a capsid-specific restriction factor, also acts as a pattern recognition receptor that activates innate immune signaling in response to the retroviral capsid lattice. Binding to the viral capsid triggers its E3 ubiquitin ligase activity, and in concert with the heterodimeric ubiquitin conjugating enzyme complex UBE2V1-UBE2N (also known as UBC13-UEV1A complex) generates 'Lys-63'-linked polyubiquitin chains, which in turn are catalysts in the autophosphorylation of the MAP3K7/TAK1 complex (includes TAK1, TAB2, and TAB3). Activation of the MAP3K7/TAK1 complex by autophosphorylation results in the induction and expression of NF-kappa-B and MAPK-responsive inflammatory genes, thereby leading to an innate immune response in the infected cell. Plays a role in regulating autophagy through activation of autophagy regulator BECN1 by causing its dissociation from its inhibitors BCL2 and TAB2. This is Tripartite motif-containing protein 5 (TRIM5) from Pan paniscus (Pygmy chimpanzee).